The sequence spans 432 residues: Asparagine--tRNA ligase (432 aa).

Belongs to the class-II aminoacyl-tRNA synthetase family. Homodimer.

The protein resides in the cytoplasm. It carries out the reaction tRNA(Asn) + L-asparagine + ATP = L-asparaginyl-tRNA(Asn) + AMP + diphosphate + H(+). This chain is Asparagine--tRNA ligase, found in Lacticaseibacillus paracasei (strain ATCC 334 / BCRC 17002 / CCUG 31169 / CIP 107868 / KCTC 3260 / NRRL B-441) (Lactobacillus paracasei).